The primary structure comprises 315 residues: 4-hydroxy-3-methylbut-2-enyl diphosphate reductase (315 aa).

Residue C12 coordinates [4Fe-4S] cluster. (2E)-4-hydroxy-3-methylbut-2-enyl diphosphate is bound by residues H41 and H74. H41 and H74 together coordinate dimethylallyl diphosphate. H41 and H74 together coordinate isopentenyl diphosphate. C96 serves as a coordination point for [4Fe-4S] cluster. H124 provides a ligand contact to (2E)-4-hydroxy-3-methylbut-2-enyl diphosphate. H124 lines the dimethylallyl diphosphate pocket. Residue H124 coordinates isopentenyl diphosphate. Catalysis depends on E126, which acts as the Proton donor. (2E)-4-hydroxy-3-methylbut-2-enyl diphosphate is bound at residue T168. Residue C198 participates in [4Fe-4S] cluster binding. (2E)-4-hydroxy-3-methylbut-2-enyl diphosphate contacts are provided by S226, S227, N228, and S270. 4 residues coordinate dimethylallyl diphosphate: S226, S227, N228, and S270. Residues S226, S227, N228, and S270 each coordinate isopentenyl diphosphate.

This sequence belongs to the IspH family. [4Fe-4S] cluster is required as a cofactor.

It catalyses the reaction isopentenyl diphosphate + 2 oxidized [2Fe-2S]-[ferredoxin] + H2O = (2E)-4-hydroxy-3-methylbut-2-enyl diphosphate + 2 reduced [2Fe-2S]-[ferredoxin] + 2 H(+). The catalysed reaction is dimethylallyl diphosphate + 2 oxidized [2Fe-2S]-[ferredoxin] + H2O = (2E)-4-hydroxy-3-methylbut-2-enyl diphosphate + 2 reduced [2Fe-2S]-[ferredoxin] + 2 H(+). The protein operates within isoprenoid biosynthesis; dimethylallyl diphosphate biosynthesis; dimethylallyl diphosphate from (2E)-4-hydroxy-3-methylbutenyl diphosphate: step 1/1. It functions in the pathway isoprenoid biosynthesis; isopentenyl diphosphate biosynthesis via DXP pathway; isopentenyl diphosphate from 1-deoxy-D-xylulose 5-phosphate: step 6/6. Its function is as follows. Catalyzes the conversion of 1-hydroxy-2-methyl-2-(E)-butenyl 4-diphosphate (HMBPP) into a mixture of isopentenyl diphosphate (IPP) and dimethylallyl diphosphate (DMAPP). Acts in the terminal step of the DOXP/MEP pathway for isoprenoid precursor biosynthesis. This chain is 4-hydroxy-3-methylbut-2-enyl diphosphate reductase, found in Pseudomonas fluorescens (strain ATCC BAA-477 / NRRL B-23932 / Pf-5).